Consider the following 281-residue polypeptide: Alcohol dehydrogenase-related 31 kDa protein (281 aa).

11–34 (YVADCGGIALETSKVLMTKNIAKL) contacts NAD(+). S139 contacts substrate. Y152 functions as the Proton acceptor in the catalytic mechanism.

The protein belongs to the short-chain dehydrogenases/reductases (SDR) family.

The sequence is that of Alcohol dehydrogenase-related 31 kDa protein (Adhr) from Drosophila ambigua (Fruit fly).